The sequence spans 345 residues: Dihydroorotate dehydrogenase (quinone) (345 aa).

Residues 65-69 (AGLDK) and threonine 89 each bind FMN. Lysine 69 is a substrate binding site. Substrate is bound at residue 114–118 (NRMGF). FMN contacts are provided by asparagine 142 and asparagine 175. Position 175 (asparagine 175) interacts with substrate. Residue serine 178 is the Nucleophile of the active site. Asparagine 180 is a binding site for substrate. Positions 220 and 248 each coordinate FMN. Residue 249-250 (NT) coordinates substrate. Residues glycine 271, glycine 300, and 321 to 322 (YT) each bind FMN.

Belongs to the dihydroorotate dehydrogenase family. Type 2 subfamily. Monomer. The cofactor is FMN.

It localises to the cell membrane. The enzyme catalyses (S)-dihydroorotate + a quinone = orotate + a quinol. It functions in the pathway pyrimidine metabolism; UMP biosynthesis via de novo pathway; orotate from (S)-dihydroorotate (quinone route): step 1/1. In terms of biological role, catalyzes the conversion of dihydroorotate to orotate with quinone as electron acceptor. The sequence is that of Dihydroorotate dehydrogenase (quinone) from Burkholderia cenocepacia (strain HI2424).